Reading from the N-terminus, the 107-residue chain is uncharacterized protein (107 aa).

Residues 6–107 (KARIDQLVTA…QEMLEVALAS (102 aa)) enclose the Glutaredoxin domain. Lys23 contributes to the glutathione binding site. Cys31 contributes to the [2Fe-2S] cluster binding site. Residues Arg60 and 85 to 86 (SD) contribute to the glutathione site.

This sequence belongs to the glutaredoxin family. Monothiol subfamily.

This is an uncharacterized protein from Synechocystis sp. (strain ATCC 27184 / PCC 6803 / Kazusa).